A 499-amino-acid chain; its full sequence is Cysteine--tRNA ligase (499 aa).

Residue cysteine 29 coordinates Zn(2+). A 'HIGH' region motif is present at residues 31 to 41 (VTVYDLCHLGH). The Zn(2+) site is built by cysteine 213, histidine 238, and glutamate 242. A 'KMSKS' region motif is present at residues 270-274 (KMSKS). Lysine 273 contacts ATP.

This sequence belongs to the class-I aminoacyl-tRNA synthetase family. Monomer. Zn(2+) serves as cofactor.

The protein localises to the cytoplasm. The enzyme catalyses tRNA(Cys) + L-cysteine + ATP = L-cysteinyl-tRNA(Cys) + AMP + diphosphate. The sequence is that of Cysteine--tRNA ligase from Synechococcus sp. (strain CC9902).